The primary structure comprises 524 residues: Ribonuclease Y (524 aa).

The helical transmembrane segment at 3–23 threads the bilayer; it reads IVINLFLIIFASVVFFAAGFF. A KH domain is found at 214–274; sequence ALSVVHIQSD…LRREHAKLTL (61 aa). An HD domain is found at 340–432; that stretch reads LLQHSREVAM…VDAANVISLA (93 aa).

The protein belongs to the RNase Y family.

The protein resides in the cell membrane. Endoribonuclease that initiates mRNA decay. This Chlorobium luteolum (strain DSM 273 / BCRC 81028 / 2530) (Pelodictyon luteolum) protein is Ribonuclease Y.